The primary structure comprises 203 residues: Guanylate kinase (203 aa).

The region spanning 3 to 181 (GTLYIVAAPS…AVAEMCAIFT (179 aa)) is the Guanylate kinase-like domain. Position 10–17 (10–17 (APSGAGKS)) interacts with ATP.

Belongs to the guanylate kinase family.

The protein localises to the cytoplasm. The catalysed reaction is GMP + ATP = GDP + ADP. Essential for recycling GMP and indirectly, cGMP. This is Guanylate kinase from Xanthomonas euvesicatoria pv. vesicatoria (strain 85-10) (Xanthomonas campestris pv. vesicatoria).